The primary structure comprises 62 residues: uncharacterized protein (62 aa).

This is an uncharacterized protein from Dictyostelium discoideum (Social amoeba).